Consider the following 172-residue polypeptide: Protein-export protein SecB (172 aa).

It belongs to the SecB family. Homotetramer, a dimer of dimers. One homotetramer interacts with 1 SecA dimer.

The protein localises to the cytoplasm. In terms of biological role, one of the proteins required for the normal export of preproteins out of the cell cytoplasm. It is a molecular chaperone that binds to a subset of precursor proteins, maintaining them in a translocation-competent state. It also specifically binds to its receptor SecA. The polypeptide is Protein-export protein SecB (Xylella fastidiosa (strain Temecula1 / ATCC 700964)).